The following is a 262-amino-acid chain: uncharacterized protein (262 aa).

A helical transmembrane segment spans residues 13-35 (VVGALLTVVVIVTAAGIIYVISH).

Its subcellular location is the membrane. This is an uncharacterized protein from Archaeoglobus fulgidus (strain ATCC 49558 / DSM 4304 / JCM 9628 / NBRC 100126 / VC-16).